Consider the following 427-residue polypeptide: Indole diterpene prenyltransferase idtF (427 aa).

R97, K195, R264, K266, Y268, and Y352 together coordinate substrate.

Belongs to the tryptophan dimethylallyltransferase family.

It participates in secondary metabolite biosynthesis. Indole diterpene prenyltransferase; part of the gene cluster that mediates the biosynthesis of paspalitrems, indole-diterpene (IDT) mycotoxins that are potent tremorgens in mammals. The geranylgeranyl diphosphate (GGPP) synthase idtG is proposed to catalyze the first step in IDT biosynthesis via catalysis of a series of iterative condensations of isopentenyl diphosphate (IPP) with dimethylallyl diphosphate (DMAPP), geranyl diphosphate (GPP), and farnesyl diphosphate (FPP), to form GGPP. Condensation of indole-3-glycerol phosphate with GGPP by the prenyltransferase idtC then forms 3-geranylgeranylindole (3-GGI). Epoxidation of the two terminal alkenes of the geranylgeranyl moiety by the FAD-dependent monooxygenase idtM, and cyclization by the terpene cyclase idtB then leads to the production of paspaline. The cytochrome P450 monooxygenase idtP then catalyzes oxidative elimination of the pendant methyl group at C-12 of paspaline and generates the C-10 ketone to yield 13-desoxypaxilline. The cytochrome P450 monooxygenase idtQ may catalyze the C-13 oxidation of 13-desoxypaxilline to afford paxilline. Considering that both paspalicine and paxilline were detected in C.paspali, idtQ also catalyzes the formation of paspalinine from 13-desoxypaxilline via paspalicine as an intermediate. Finally, the alpha-prenyltransferase idtF prenylates paspalinine at the C-20 or the C-21 positions to yield paspalitrems A and C, respectively. The hydroxylation of paspalitrem A at C-32 by a still unknown oxidase affords paspalitrem B. This Claviceps paspali (Rye ergot fungus) protein is Indole diterpene prenyltransferase idtF.